A 317-amino-acid chain; its full sequence is Protoheme IX farnesyltransferase (317 aa).

9 consecutive transmembrane segments (helical) span residues 28–48 (IIPL…HGHI), 53–73 (LLIT…LNCI), 101–121 (LIFA…FVNL), 122–142 (LSAC…THWL), 150–170 (IVIG…AVTG), 178–198 (ILFA…ALMI), 223–243 (IWIY…PFQA), 246–266 (LFYA…AWEL), and 282–302 (YSIL…LPAV).

This sequence belongs to the UbiA prenyltransferase family. Protoheme IX farnesyltransferase subfamily.

The protein localises to the cell inner membrane. It catalyses the reaction heme b + (2E,6E)-farnesyl diphosphate + H2O = Fe(II)-heme o + diphosphate. It functions in the pathway porphyrin-containing compound metabolism; heme O biosynthesis; heme O from protoheme: step 1/1. In terms of biological role, converts heme B (protoheme IX) to heme O by substitution of the vinyl group on carbon 2 of heme B porphyrin ring with a hydroxyethyl farnesyl side group. This is Protoheme IX farnesyltransferase from Picosynechococcus sp. (strain ATCC 27264 / PCC 7002 / PR-6) (Agmenellum quadruplicatum).